The chain runs to 291 residues: MRSARVVAVCGPTASGKSEVADELSALLTEAEGVWVPTVVVDSMQVYREIPEITNQARSRPAELVGVVPVTREWTVAEHRRRARAAIEGSGAGAAVLDAGTGMYLNATVLDIPLAPKVPREIRALAQRAAAGAANPRREARRLELELYGAPERGSIWEGEPAYELALIYLRPERASLDEAIARRSSRIARRGLADARRLQDLLEAGARVNPSVLGSIGVRELLSHLRGEISLPEAEETISVRTRHLARRQMRWFDKLARTLSGRARLVVSPSPEDPALRKALHSMHDIIGA.

ATP is bound at residue Gly11–Ser18. Thr13 to Ser18 serves as a coordination point for substrate. An interaction with substrate tRNA region spans residues Asp42–Gln45.

The protein belongs to the IPP transferase family. Monomer. Requires Mg(2+) as cofactor.

It carries out the reaction adenosine(37) in tRNA + dimethylallyl diphosphate = N(6)-dimethylallyladenosine(37) in tRNA + diphosphate. Its function is as follows. Catalyzes the transfer of a dimethylallyl group onto the adenine at position 37 in tRNAs that read codons beginning with uridine, leading to the formation of N6-(dimethylallyl)adenosine (i(6)A). In Rubrobacter xylanophilus (strain DSM 9941 / JCM 11954 / NBRC 16129 / PRD-1), this protein is tRNA dimethylallyltransferase.